Consider the following 608-residue polypeptide: Alpha-1,3-galactosidase A (608 aa).

The signal sequence occupies residues Met1–Gly21. Residue Cys22 is the site of N-palmitoyl cysteine attachment. A lipid anchor (S-diacylglycerol cysteine) is attached at Cys22. PbH1 repeat units lie at residues Thr262–Asn292, Lys318–Gly340, Pro426–Val448, Ser449–Ser470, and Val481–Pro507.

It belongs to the glycosyl hydrolase 110 family. A subfamily.

Its subcellular location is the cell membrane. It catalyses the reaction Hydrolysis of terminal, non-reducing branched (1-&gt;3)-alpha-D-galactosidic residues, producing free D-galactose.. The enzyme catalyses Hydrolysis of terminal, non-reducing alpha-D-galactose residues in alpha-D-galactosides, including galactose oligosaccharides, galactomannans and galactolipids.. In terms of biological role, alpha-galactosidase that specifically removes branched alpha-1,3-linked galactose residues present in blood group B antigens. Has no activity toward linear alpha-1,3-linked galactose residues. This chain is Alpha-1,3-galactosidase A (glaA), found in Shewanella woodyi (strain ATCC 51908 / MS32).